The chain runs to 201 residues: Holliday junction branch migration complex subunit RuvA (201 aa).

Residues 1 to 64 are domain I; the sequence is MFNSISGILS…EDQMRLFGFP (64 aa). The tract at residues 65–140 is domain II; sequence NQAERSLFLD…KLTNLNEVSS (76 aa). The segment at 140–144 is flexible linker; that stretch reads SKGQA. A domain III region spans residues 145-201; it reads SVSCEYEDIVTALTEMGFERKSVIVQVEKIAEEMKAAGSDPLKNEEELFRRSIVALS.

Belongs to the RuvA family. Homotetramer. Forms an RuvA(8)-RuvB(12)-Holliday junction (HJ) complex. HJ DNA is sandwiched between 2 RuvA tetramers; dsDNA enters through RuvA and exits via RuvB. An RuvB hexamer assembles on each DNA strand where it exits the tetramer. Each RuvB hexamer is contacted by two RuvA subunits (via domain III) on 2 adjacent RuvB subunits; this complex drives branch migration. In the full resolvosome a probable DNA-RuvA(4)-RuvB(12)-RuvC(2) complex forms which resolves the HJ.

It is found in the cytoplasm. Its function is as follows. The RuvA-RuvB-RuvC complex processes Holliday junction (HJ) DNA during genetic recombination and DNA repair, while the RuvA-RuvB complex plays an important role in the rescue of blocked DNA replication forks via replication fork reversal (RFR). RuvA specifically binds to HJ cruciform DNA, conferring on it an open structure. The RuvB hexamer acts as an ATP-dependent pump, pulling dsDNA into and through the RuvAB complex. HJ branch migration allows RuvC to scan DNA until it finds its consensus sequence, where it cleaves and resolves the cruciform DNA. The chain is Holliday junction branch migration complex subunit RuvA from Treponema denticola (strain ATCC 35405 / DSM 14222 / CIP 103919 / JCM 8153 / KCTC 15104).